A 252-amino-acid chain; its full sequence is 4-hydroxy-tetrahydrodipicolinate reductase (252 aa).

8-13 lines the NAD(+) pocket; it reads GALGRM. Residue arginine 36 participates in NADP(+) binding. Residues 89–91 and 114–117 each bind NAD(+); these read GTT and SSNF. The active-site Proton donor/acceptor is histidine 146. (S)-2,3,4,5-tetrahydrodipicolinate is bound at residue histidine 147. Catalysis depends on lysine 150, which acts as the Proton donor. 156-157 contributes to the (S)-2,3,4,5-tetrahydrodipicolinate binding site; sequence GT.

This sequence belongs to the DapB family.

It localises to the cytoplasm. The enzyme catalyses (S)-2,3,4,5-tetrahydrodipicolinate + NAD(+) + H2O = (2S,4S)-4-hydroxy-2,3,4,5-tetrahydrodipicolinate + NADH + H(+). It carries out the reaction (S)-2,3,4,5-tetrahydrodipicolinate + NADP(+) + H2O = (2S,4S)-4-hydroxy-2,3,4,5-tetrahydrodipicolinate + NADPH + H(+). It functions in the pathway amino-acid biosynthesis; L-lysine biosynthesis via DAP pathway; (S)-tetrahydrodipicolinate from L-aspartate: step 4/4. In terms of biological role, catalyzes the conversion of 4-hydroxy-tetrahydrodipicolinate (HTPA) to tetrahydrodipicolinate. The sequence is that of 4-hydroxy-tetrahydrodipicolinate reductase from Methanoculleus marisnigri (strain ATCC 35101 / DSM 1498 / JR1).